We begin with the raw amino-acid sequence, 493 residues long: Cytochrome P450 2A9 (493 aa).

Position 438 (Cys-438) interacts with heme.

This sequence belongs to the cytochrome P450 family. The cofactor is heme. Liver.

It is found in the endoplasmic reticulum membrane. Its subcellular location is the microsome membrane. The catalysed reaction is an organic molecule + reduced [NADPH--hemoprotein reductase] + O2 = an alcohol + oxidized [NADPH--hemoprotein reductase] + H2O + H(+). Its function is as follows. Cytochromes P450 are a group of heme-thiolate monooxygenases. In liver microsomes, this enzyme is involved in an NADPH-dependent electron transport pathway. It oxidizes a variety of structurally unrelated compounds, including steroids, fatty acids, and xenobiotics. The protein is Cytochrome P450 2A9 (CYP2A9) of Mesocricetus auratus (Golden hamster).